Reading from the N-terminus, the 102-residue chain is MATVPLGQGLLLAAILFALGLVGVLVRRNLLFMLMSLEVMLNAAGVAFIVAGARWASPDGQIMFILVLTLAAAEVSVGLALILLMHRRIPTLDADAGDGLRG.

3 helical membrane passes run 6–26 (LGQGLLLAAILFALGLVGVLV), 30–50 (LLFMLMSLEVMLNAAGVAFIV), and 64–84 (FILVLTLAAAEVSVGLALILL).

This sequence belongs to the complex I subunit 4L family. In terms of assembly, NDH-1 is composed of 14 different subunits. Subunits NuoA, H, J, K, L, M, N constitute the membrane sector of the complex.

It localises to the cell inner membrane. The enzyme catalyses a quinone + NADH + 5 H(+)(in) = a quinol + NAD(+) + 4 H(+)(out). In terms of biological role, NDH-1 shuttles electrons from NADH, via FMN and iron-sulfur (Fe-S) centers, to quinones in the respiratory chain. The immediate electron acceptor for the enzyme in this species is believed to be ubiquinone. Couples the redox reaction to proton translocation (for every two electrons transferred, four hydrogen ions are translocated across the cytoplasmic membrane), and thus conserves the redox energy in a proton gradient. The sequence is that of NADH-quinone oxidoreductase subunit K from Acidiphilium cryptum (strain JF-5).